A 365-amino-acid polypeptide reads, in one-letter code: L-lactate oxidase (365 aa).

Residues 2–365 (TAISSPINLF…QDIDTSFLHL (364 aa)) form the FMN hydroxy acid dehydrogenase domain. Tyr-28 lines the pyruvate pocket. Residues 81-83 (PMA), Ser-110, and Gln-135 contribute to the FMN site. Residue Tyr-137 coordinates pyruvate. Thr-163 lines the FMN pocket. Arg-172 lines the pyruvate pocket. Positions 239 and 261 each coordinate FMN. Residues His-263 and Arg-266 each contribute to the pyruvate site. His-263 acts as the Proton acceptor in catalysis. Residues 294-298 (DGGIR) and Arg-318 each bind FMN.

It belongs to the FMN-dependent alpha-hydroxy acid dehydrogenase family. As to quaternary structure, homotetramer. Requires FMN as cofactor.

The catalysed reaction is (S)-lactate + O2 = pyruvate + H2O2. It carries out the reaction glyoxylate + O2 + H2O = oxalate + H2O2 + H(+). Catalyzes the oxidation of (S)-lactate (L-lactate) to pyruvate, with a reduction of O2 to H2O2. In extant N2-fixing cyanobacteria such as Nostoc, this enzyme primarily serves as an O2-scavenging enzyme, protecting nitrogenase that is extremely sensitive to O2, and is therefore an essential partner in N2 fixation. Also shows clear oxidase activity with glyoxylate in vitro, and low activity with glycerate, hydroxypyruvate and glycolate. The very low glycolate oxidase activity indicates that this enzyme is unlikely to be involved in photorespiratory glycolate metabolism, a pathway that seems to exist in this cyanobacterium, but in which the oxidation of glycolate is taken over by glycolate dehydrogenase (GlcD). Is not able to use D-lactate as substrate and does not show any dehydrogenase activity with NAD(+) or NADP(+). This is L-lactate oxidase from Nostoc sp. (strain PCC 7120 / SAG 25.82 / UTEX 2576).